The sequence spans 137 residues: Methylglyoxal synthase (137 aa).

The region spanning 1–137 (MKIALIAHDK…NLVRGGEPNV (137 aa)) is the MGS-like domain. Residues H8, K12, 34-37 (TGTT), and 54-55 (SG) contribute to the substrate site. D60 serves as the catalytic Proton donor/acceptor. Substrate is bound at residue H87.

The protein belongs to the methylglyoxal synthase family.

It catalyses the reaction dihydroxyacetone phosphate = methylglyoxal + phosphate. Its function is as follows. Catalyzes the formation of methylglyoxal from dihydroxyacetone phosphate. The chain is Methylglyoxal synthase from Bacillus velezensis (strain DSM 23117 / BGSC 10A6 / LMG 26770 / FZB42) (Bacillus amyloliquefaciens subsp. plantarum).